A 195-amino-acid chain; its full sequence is N-terminal acetyltransferase B complex catalytic subunit NAT3 (195 aa).

Positions Thr-2–Ala-172 constitute an N-acetyltransferase domain.

This sequence belongs to the acetyltransferase family. GNAT subfamily. In terms of assembly, component of the N-terminal acetyltransferase B (NatB) complex, which is composed of NAT3 and MDM20.

Its subcellular location is the cytoplasm. It catalyses the reaction N-terminal L-methionyl-L-asparaginyl-[protein] + acetyl-CoA = N-terminal N(alpha)-acetyl-L-methionyl-L-asparaginyl-[protein] + CoA + H(+). The catalysed reaction is N-terminal L-methionyl-L-glutaminyl-[protein] + acetyl-CoA = N-terminal N(alpha)-acetyl-L-methionyl-L-glutaminyl-[protein] + CoA + H(+). It carries out the reaction N-terminal L-methionyl-L-aspartyl-[protein] + acetyl-CoA = N-terminal N(alpha)-acetyl-L-methionyl-L-aspartyl-[protein] + CoA + H(+). The enzyme catalyses N-terminal L-methionyl-L-glutamyl-[protein] + acetyl-CoA = N-terminal N(alpha)-acetyl-L-methionyl-L-glutamyl-[protein] + CoA + H(+). Its function is as follows. Catalytic subunit of the NatB N-terminal acetyltransferase, which catalyzes acetylation of the amino-terminal methionine residues of all proteins beginning with Met-Asp or Met-Glu and of some proteins beginning with Met-Asn, Met-Gln or Met-Met. NatB acetylates TPM1 protein and regulates tropomyocin-actin interactions, it is presumed to N-acetylate 15% of all yeast proteins. The chain is N-terminal acetyltransferase B complex catalytic subunit NAT3 from Saccharomyces cerevisiae (strain ATCC 204508 / S288c) (Baker's yeast).